The following is a 230-amino-acid chain: uncharacterized protein (230 aa).

Positions 2-69 (HRLAKIISNA…KPRLWIYYKP (68 aa)) constitute an S4 RNA-binding domain. Residue Asp102 is the Nucleophile of the active site.

This sequence belongs to the pseudouridine synthase RsuA family.

It carries out the reaction a uridine in RNA = a pseudouridine in RNA. This is an uncharacterized protein from Rickettsia conorii (strain ATCC VR-613 / Malish 7).